The primary structure comprises 249 residues: ATP synthase subunit a (249 aa).

Helical transmembrane passes span 35–55, 92–112, 131–151, 187–209, and 221–241; these read ILLTSWFVIALILLAAFISSL, VPFIGTLFLFIFVSNWSGALV, INTTVALALLTSIAYFYAGIS, LFGNILADELVVGVLVLLVPLFI, and SAIQALIFATLAANYIGEALE.

The protein belongs to the ATPase A chain family. As to quaternary structure, F-type ATPases have 2 components, CF(1) - the catalytic core - and CF(0) - the membrane proton channel. CF(1) has five subunits: alpha(3), beta(3), gamma(1), delta(1), epsilon(1). CF(0) has four main subunits: a, b, b' and c.

It is found in the cellular thylakoid membrane. Functionally, key component of the proton channel; it plays a direct role in the translocation of protons across the membrane. In Trichodesmium erythraeum (strain IMS101), this protein is ATP synthase subunit a.